The primary structure comprises 485 residues: MSKFIDRVVLHVRAGKGGHGCASVHREKFKPLGGPDGGNGGNGGDVVLEVDPNVHTLLDFHFHPHAKAGNGKPGEGGNRDGKMGSDLLLKVPDGTVVLDRDGEVLVDLVGAGNRFVAARGGRGGLGNAALASKARKAPGFALLGEDGEERDLVLELKSVADVGLVGFPSAGKSSLVSVLSAAKPKIADYPFTTLVPNLGVVASGDTTFTIADVPGLIPGASQGRGLGLDFLRHLERCAVLAHVVDCATLEPGRDPISDVDALEAELAAYKPALAADAGLGDLADRPRVVILNKTDVPDAAELAEMVTPEFTARGWPVFQISAVSRAGLRPLTFALADLVREYREAHPKAAPKRPVIRPIAVDESGFTVHPDPDEPGGFIVRGARPERWVRQTQFDNDEAVGYLADRLARLGVEEELVRLGAEPGAPVTIGDVTFDWEPQISAGVDMVRTGRGTDVRLEQSDRVSAAERKHASRVRRGLVEDDEQR.

The Obg domain maps to 2-159; sequence SKFIDRVVLH…RDLVLELKSV (158 aa). Residues 64–84 are disordered; that stretch reads PHAKAGNGKPGEGGNRDGKMG. In terms of domain architecture, OBG-type G spans 160–340; that stretch reads ADVGLVGFPS…LTFALADLVR (181 aa). Residues 166 to 173, 191 to 195, 212 to 215, 292 to 295, and 321 to 323 contribute to the GTP site; these read GFPSAGKS, FTTLV, DVPG, NKTD, and SAV. Positions 173 and 193 each coordinate Mg(2+). The OCT domain maps to 358–438; sequence PIAVDESGFT…IGDVTFDWEP (81 aa). A compositionally biased stretch (basic and acidic residues) spans 457 to 469; that stretch reads LEQSDRVSAAERK. A disordered region spans residues 457-485; that stretch reads LEQSDRVSAAERKHASRVRRGLVEDDEQR.

It belongs to the TRAFAC class OBG-HflX-like GTPase superfamily. OBG GTPase family. Monomer. Requires Mg(2+) as cofactor.

The protein localises to the cytoplasm. An essential GTPase which binds GTP, GDP and possibly (p)ppGpp with moderate affinity, with high nucleotide exchange rates and a fairly low GTP hydrolysis rate. Plays a role in control of the cell cycle, stress response, ribosome biogenesis and in those bacteria that undergo differentiation, in morphogenesis control. The polypeptide is GTPase Obg (Nocardia farcinica (strain IFM 10152)).